The following is a 436-amino-acid chain: Chorion-specific transcription factor GCMa (436 aa).

Positions 14-169 (LSWDINDMKL…KLEAEARRAM (156 aa)) form a DNA-binding region, GCM. Cys76, Cys82, Cys86, Cys113, Cys116, Cys125, His152, and His154 together coordinate Zn(2+).

In terms of processing, polyubiquitinated in the presence of UBE2D2 and FBXW2 (in vitro).

The protein localises to the nucleus. Its function is as follows. Transcription factor involved in the control of expression of placental growth factor (PGF) and other placenta-specific genes. Binds to the trophoblast-specific element 2 (TSE2) of the aromatase gene enhancer. Binds to the SYDE1 promoter. Has a central role in mediating the differentiation of trophoblast cells along both the villous and extravillous pathways in placental development. The polypeptide is Chorion-specific transcription factor GCMa (Gcm1) (Rattus norvegicus (Rat)).